We begin with the raw amino-acid sequence, 581 residues long: 4-hydroxy-3-methylbut-2-en-1-yl diphosphate synthase (flavodoxin) (581 aa).

C489, C492, C523, and E530 together coordinate [4Fe-4S] cluster.

This sequence belongs to the IspG family. It depends on [4Fe-4S] cluster as a cofactor.

It carries out the reaction (2E)-4-hydroxy-3-methylbut-2-enyl diphosphate + oxidized [flavodoxin] + H2O + 2 H(+) = 2-C-methyl-D-erythritol 2,4-cyclic diphosphate + reduced [flavodoxin]. Its pathway is isoprenoid biosynthesis; isopentenyl diphosphate biosynthesis via DXP pathway; isopentenyl diphosphate from 1-deoxy-D-xylulose 5-phosphate: step 5/6. Converts 2C-methyl-D-erythritol 2,4-cyclodiphosphate (ME-2,4cPP) into 1-hydroxy-2-methyl-2-(E)-butenyl 4-diphosphate. The protein is 4-hydroxy-3-methylbut-2-en-1-yl diphosphate synthase (flavodoxin) of Porphyromonas gingivalis (strain ATCC BAA-308 / W83).